Reading from the N-terminus, the 241-residue chain is Mitochondrial inner membrane protease ATP23 (241 aa).

H141 serves as a coordination point for a divalent metal cation. E142 is an active-site residue. H145 contacts a divalent metal cation.

This sequence belongs to the peptidase M76 family.

The protein localises to the mitochondrion inner membrane. Functionally, has a dual role in the assembly of mitochondrial ATPase. Acts as a protease that removes N-terminal residues of mitochondrial ATPase CF(0) subunit 6 at the intermembrane space side. Also involved in the correct assembly of the membrane-embedded ATPase CF(0) particle, probably mediating association of subunit 6 with the subunit 9 ring. In Lodderomyces elongisporus (strain ATCC 11503 / CBS 2605 / JCM 1781 / NBRC 1676 / NRRL YB-4239) (Yeast), this protein is Mitochondrial inner membrane protease ATP23 (ATP23).